A 209-amino-acid polypeptide reads, in one-letter code: Uracil phosphoribosyltransferase (209 aa).

Residues Arg79, Arg104, and 131–139 (DPMLATGNS) contribute to the 5-phospho-alpha-D-ribose 1-diphosphate site. Residues Ile194 and 199 to 201 (GDA) contribute to the uracil site. Position 200 (Asp200) interacts with 5-phospho-alpha-D-ribose 1-diphosphate.

It belongs to the UPRTase family. The cofactor is Mg(2+).

It catalyses the reaction UMP + diphosphate = 5-phospho-alpha-D-ribose 1-diphosphate + uracil. The protein operates within pyrimidine metabolism; UMP biosynthesis via salvage pathway; UMP from uracil: step 1/1. Its activity is regulated as follows. Allosterically activated by GTP. Catalyzes the conversion of uracil and 5-phospho-alpha-D-ribose 1-diphosphate (PRPP) to UMP and diphosphate. The sequence is that of Uracil phosphoribosyltransferase from Polaromonas naphthalenivorans (strain CJ2).